A 261-amino-acid chain; its full sequence is DNA repair protein RecO (261 aa).

The protein belongs to the RecO family.

Functionally, involved in DNA repair and RecF pathway recombination. This Chlorobium limicola (strain DSM 245 / NBRC 103803 / 6330) protein is DNA repair protein RecO.